A 961-amino-acid polypeptide reads, in one-letter code: Zinc finger protein basonuclin-1 (961 aa).

The interval 210–219 is hydrophobic; the sequence is MTFMLPFQFF. 2 C2H2-type zinc fingers span residues 325–348 and 353–382; these read VFCTACEKTFYDKGTLKIHYNAVH and HKCTIEGCNMVFSSLRSRNRHSANPNPRLH. The tract at residues 370–393 is disordered; it reads RNRHSANPNPRLHMPMNRNNRDKD. The Nuclear localization signal motif lies at 501 to 507; it reads PKKKSRK. 2 positions are modified to phosphoserine: Ser505 and Ser509. The interval 523-572 is disordered; sequence EEKRHSLSSDDEVPLQVVSEDEPEDSSPRSDRVPEEQHTQLSLEEPLPQG. Residues 531 to 547 show a composition bias toward acidic residues; the sequence is SDDEVPLQVVSEDEPED. Over residues 548 to 560 the composition is skewed to basic and acidic residues; it reads SSPRSDRVPEEQH. 2 C2H2-type zinc fingers span residues 687 to 711 and 715 to 743; these read FQCDICKKTFKNACSMKTHEKNTHA and HACTVEGCGAAFPSRRSRDRHSSNLSLHQ. The tract at residues 810-864 is disordered; sequence ESYNSGPPSEGTILDLSTTSSMKSESSSHSSWDSDGVSEEGTALMEDSDGNCEGQ. The span at 826–844 shows a compositional bias: low complexity; it reads STTSSMKSESSSHSSWDSD. 2 consecutive C2H2-type zinc fingers follow at residues 895-918 and 923-950; these read ITCHLCQKIYSNKGTFRAHYKTVH and HKCKVPGCNTMFSSVRSRNRHSQNPNLH. Residues 937–961 are disordered; it reads VRSRNRHSQNPNLHKSLASSPSHLQ.

Interacts with HSF2BP (via C-terminus). Post-translationally, phosphorylation on Ser-505 and Ser-509 leads to cytoplasmic localization. As to expression, epidermis and germ cells of testis and ovary.

Its subcellular location is the nucleus. It localises to the cytoplasm. It is found in the nucleoplasm. In terms of biological role, transcriptional activator. It is likely involved in the regulation of keratinocytes terminal differentiation in squamous epithelia and hair follicles. Required for the maintenance of spermatogenesis. It is involved in the positive regulation of oocyte maturation, probably acting through the control of BMP15 levels and regulation of AKT signaling cascade. May also play a role in the early development of embryos. This chain is Zinc finger protein basonuclin-1 (Bnc1), found in Mus musculus (Mouse).